Reading from the N-terminus, the 211-residue chain is C-type lectin domain-containing protein 158 (211 aa).

A signal peptide spans M1 to A16.

The polypeptide is C-type lectin domain-containing protein 158 (clec-158) (Caenorhabditis elegans).